The chain runs to 511 residues: UDP-N-acetylmuramoyl-L-alanyl-D-glutamate--2,6-diaminopimelate ligase (511 aa).

Residue serine 30 coordinates UDP-N-acetyl-alpha-D-muramoyl-L-alanyl-D-glutamate. Position 110-116 (110-116 (GTNGKTT)) interacts with ATP. Residues 152–153 (TT), serine 179, glutamine 185, and arginine 187 each bind UDP-N-acetyl-alpha-D-muramoyl-L-alanyl-D-glutamate. An N6-carboxylysine modification is found at lysine 219. Meso-2,6-diaminopimelate contacts are provided by residues arginine 385, 409–412 (DNPR), glycine 476, and glutamate 480. Residues 409-412 (DNPR) carry the Meso-diaminopimelate recognition motif motif.

This sequence belongs to the MurCDEF family. MurE subfamily. It depends on Mg(2+) as a cofactor. Post-translationally, carboxylation is probably crucial for Mg(2+) binding and, consequently, for the gamma-phosphate positioning of ATP.

The protein resides in the cytoplasm. The catalysed reaction is UDP-N-acetyl-alpha-D-muramoyl-L-alanyl-D-glutamate + meso-2,6-diaminopimelate + ATP = UDP-N-acetyl-alpha-D-muramoyl-L-alanyl-gamma-D-glutamyl-meso-2,6-diaminopimelate + ADP + phosphate + H(+). It participates in cell wall biogenesis; peptidoglycan biosynthesis. Functionally, catalyzes the addition of meso-diaminopimelic acid to the nucleotide precursor UDP-N-acetylmuramoyl-L-alanyl-D-glutamate (UMAG) in the biosynthesis of bacterial cell-wall peptidoglycan. The polypeptide is UDP-N-acetylmuramoyl-L-alanyl-D-glutamate--2,6-diaminopimelate ligase (Geobacter metallireducens (strain ATCC 53774 / DSM 7210 / GS-15)).